Consider the following 240-residue polypeptide: RNA polymerase sigma factor SigI (240 aa).

Residues 56-69 (DEYSIGLFAFNEAI) carry the Polymerase core binding motif. The segment at residues 194–213 (LKHIEPRVRVSRKTLERHRK) is a DNA-binding region (H-T-H motif).

It belongs to the sigma-70 factor family. SigI subfamily. In terms of assembly, interacts with RsgI.

The protein localises to the cytoplasm. Its activity is regulated as follows. Negatively regulated by the anti-sigma-I factor RsgI. In terms of biological role, sigma factors are initiation factors that promote the attachment of RNA polymerase to specific initiation sites and are then released. This sigma factor contributes to both stress response and virulence gene expression. The protein is RNA polymerase sigma factor SigI of Bacillus anthracis.